Consider the following 124-residue polypeptide: Small ribosomal subunit protein uS12 (124 aa).

Asp-89 carries the post-translational modification 3-methylthioaspartic acid. Positions 105–124 are disordered; the sequence is QGVKNRKQARSRYGAKKEKS. Residues 108 to 118 show a composition bias toward basic residues; sequence KNRKQARSRYG.

It belongs to the universal ribosomal protein uS12 family. In terms of assembly, part of the 30S ribosomal subunit. Contacts proteins S8 and S17. May interact with IF1 in the 30S initiation complex.

Functionally, with S4 and S5 plays an important role in translational accuracy. Its function is as follows. Interacts with and stabilizes bases of the 16S rRNA that are involved in tRNA selection in the A site and with the mRNA backbone. Located at the interface of the 30S and 50S subunits, it traverses the body of the 30S subunit contacting proteins on the other side and probably holding the rRNA structure together. The combined cluster of proteins S8, S12 and S17 appears to hold together the shoulder and platform of the 30S subunit. In Mycobacterium avium (strain 104), this protein is Small ribosomal subunit protein uS12.